Consider the following 83-residue polypeptide: METILGMTAIAVALLIGMGALGTAIGFGLLGGKFLEGAARQPEMAPMLQVKMFIVAGLLDAVTMIGVGIALYMLFTNPLGAML.

2 helical membrane-spanning segments follow: residues 10 to 30 (IAVA…FGLL) and 52 to 72 (MFIV…IALY).

It belongs to the ATPase C chain family. As to quaternary structure, F-type ATPases have 2 components, F(1) - the catalytic core - and F(0) - the membrane proton channel. F(1) has five subunits: alpha(3), beta(3), gamma(1), delta(1), epsilon(1). F(0) has three main subunits: a(1), b(2) and c(10-14). The alpha and beta chains form an alternating ring which encloses part of the gamma chain. F(1) is attached to F(0) by a central stalk formed by the gamma and epsilon chains, while a peripheral stalk is formed by the delta and b chains.

The protein resides in the cell inner membrane. F(1)F(0) ATP synthase produces ATP from ADP in the presence of a proton or sodium gradient. F-type ATPases consist of two structural domains, F(1) containing the extramembraneous catalytic core and F(0) containing the membrane proton channel, linked together by a central stalk and a peripheral stalk. During catalysis, ATP synthesis in the catalytic domain of F(1) is coupled via a rotary mechanism of the central stalk subunits to proton translocation. Functionally, key component of the F(0) channel; it plays a direct role in translocation across the membrane. A homomeric c-ring of between 10-14 subunits forms the central stalk rotor element with the F(1) delta and epsilon subunits. This chain is ATP synthase subunit c, found in Shewanella denitrificans (strain OS217 / ATCC BAA-1090 / DSM 15013).